Consider the following 302-residue polypeptide: 33 kDa chaperonin (302 aa).

2 disulfide bridges follow: C234/C236 and C267/C270.

Belongs to the HSP33 family. Post-translationally, under oxidizing conditions two disulfide bonds are formed involving the reactive cysteines. Under reducing conditions zinc is bound to the reactive cysteines and the protein is inactive.

The protein resides in the cytoplasm. In terms of biological role, redox regulated molecular chaperone. Protects both thermally unfolding and oxidatively damaged proteins from irreversible aggregation. Plays an important role in the bacterial defense system toward oxidative stress. The protein is 33 kDa chaperonin of Neisseria gonorrhoeae (strain NCCP11945).